A 203-amino-acid chain; its full sequence is Translation initiation factor IF-3 (203 aa).

The span at 172 to 182 (EAPKNEKKTKE) shows a compositional bias: basic and acidic residues. The tract at residues 172 to 203 (EAPKNEKKTKENNPPFNRINLMKGENHAKNED) is disordered.

This sequence belongs to the IF-3 family. Monomer.

Its subcellular location is the cytoplasm. IF-3 binds to the 30S ribosomal subunit and shifts the equilibrium between 70S ribosomes and their 50S and 30S subunits in favor of the free subunits, thus enhancing the availability of 30S subunits on which protein synthesis initiation begins. The protein is Translation initiation factor IF-3 of Helicobacter pylori (strain ATCC 700392 / 26695) (Campylobacter pylori).